Here is a 221-residue protein sequence, read N- to C-terminus: MENNDELMPREKLLAFGAKALSDYELLAIFLRTGIKGCPVMSLSKNVLTHFGPLHALLSADKKAFCSVKGLGITQFIQLQAITEMTKRYLKQDMLSTPIINDPETVKLFLLTELQHEEREVFMVLFLDNQHRLIKKERLFLGTIYVSAVYPREIIKEALYCNAAALILAHNHPSGITEPSYSDQLITKKIQDAAELMEIRVLDHLIVGKSDCYSFAENCLL.

An MPN domain is found at 99–221 (IINDPETVKL…CYSFAENCLL (123 aa)). Zn(2+) contacts are provided by H170, H172, and D183. The JAMM motif motif lies at 170–183 (HNHPSGITEPSYSD).

This sequence belongs to the UPF0758 family.

The sequence is that of UPF0758 protein HI_0952 from Haemophilus influenzae (strain ATCC 51907 / DSM 11121 / KW20 / Rd).